The sequence spans 337 residues: Anthranilate phosphoribosyltransferase (337 aa).

5-phospho-alpha-D-ribose 1-diphosphate-binding positions include Gly-80, Gly-83–Asp-84, Thr-88, Asn-90–Thr-93, Lys-108–Ser-116, and Ser-120. Gly-80 contributes to the anthranilate binding site. Position 92 (Ser-92) interacts with Mg(2+). Asn-111 provides a ligand contact to anthranilate. An anthranilate-binding site is contributed by Arg-166. Positions 225 and 226 each coordinate Mg(2+).

The protein belongs to the anthranilate phosphoribosyltransferase family. Homodimer. Mg(2+) is required as a cofactor.

The catalysed reaction is N-(5-phospho-beta-D-ribosyl)anthranilate + diphosphate = 5-phospho-alpha-D-ribose 1-diphosphate + anthranilate. It participates in amino-acid biosynthesis; L-tryptophan biosynthesis; L-tryptophan from chorismate: step 2/5. Catalyzes the transfer of the phosphoribosyl group of 5-phosphorylribose-1-pyrophosphate (PRPP) to anthranilate to yield N-(5'-phosphoribosyl)-anthranilate (PRA). This Syntrophobacter fumaroxidans (strain DSM 10017 / MPOB) protein is Anthranilate phosphoribosyltransferase.